The primary structure comprises 434 residues: Enolase (434 aa).

Gln167 is a binding site for (2R)-2-phosphoglycerate. The Proton donor role is filled by Glu209. Mg(2+) contacts are provided by Asp246, Glu291, and Asp318. Residues Lys343, Arg372, Ser373, and Lys394 each contribute to the (2R)-2-phosphoglycerate site. Lys343 acts as the Proton acceptor in catalysis.

It belongs to the enolase family. In terms of assembly, component of the RNA degradosome, a multiprotein complex involved in RNA processing and mRNA degradation. It depends on Mg(2+) as a cofactor.

The protein localises to the cytoplasm. The protein resides in the secreted. It localises to the cell surface. The catalysed reaction is (2R)-2-phosphoglycerate = phosphoenolpyruvate + H2O. It participates in carbohydrate degradation; glycolysis; pyruvate from D-glyceraldehyde 3-phosphate: step 4/5. In terms of biological role, catalyzes the reversible conversion of 2-phosphoglycerate (2-PG) into phosphoenolpyruvate (PEP). It is essential for the degradation of carbohydrates via glycolysis. The protein is Enolase of Buchnera aphidicola subsp. Acyrthosiphon pisum (strain APS) (Acyrthosiphon pisum symbiotic bacterium).